The following is a 249-amino-acid chain: Small ribosomal subunit protein uS3 (249 aa).

In terms of domain architecture, KH type-2 spans 39-109; the sequence is IRTYVLARLK…EVKIDVVEVV (71 aa). A compositionally biased stretch (basic and acidic residues) spans 226 to 239; that stretch reads KERRNDAGARNRDS. Residues 226 to 249 are disordered; that stretch reads KERRNDAGARNRDSRTKRRHRTKR. Positions 240 to 249 are enriched in basic residues; sequence RTKRRHRTKR.

This sequence belongs to the universal ribosomal protein uS3 family. As to quaternary structure, part of the 30S ribosomal subunit. Forms a tight complex with proteins S10 and S14.

In terms of biological role, binds the lower part of the 30S subunit head. Binds mRNA in the 70S ribosome, positioning it for translation. This chain is Small ribosomal subunit protein uS3, found in Pelodictyon phaeoclathratiforme (strain DSM 5477 / BU-1).